We begin with the raw amino-acid sequence, 347 residues long: Transcription termination/antitermination protein NusA (347 aa).

Residues 112–184 (GEIVAGVIQR…REPLITLSRT (73 aa)) enclose the S1 motif domain. The KH domain occupies 287–347 (ARAARVVVPD…GVSRGMAHDR (61 aa)). Residues 322 to 347 (DIRGDAPPPPPGQPEPGVSRGMAHDR) are disordered.

It belongs to the NusA family. Monomer. Binds directly to the core enzyme of the DNA-dependent RNA polymerase and to nascent RNA.

Its subcellular location is the cytoplasm. Participates in both transcription termination and antitermination. In Mycobacterium bovis (strain ATCC BAA-935 / AF2122/97), this protein is Transcription termination/antitermination protein NusA.